A 300-amino-acid polypeptide reads, in one-letter code: Cation-efflux pump FieF (300 aa).

Residues 24–44 traverse the membrane as a helical segment; it reads LLIKILAWWYTGSVSILAALV. Residues D45 and D49 each coordinate Zn(2+). The next 2 helical transmembrane spans lie at 82–102 and 114–134; these read AALAQSMFISGSALFLFLTSI and PGVGIGVTVIALICTIILVTF. Positions 153 and 157 each coordinate Zn(2+). A run of 2 helical transmembrane segments spans residues 156–176 and 178–198; these read SDVMMNGAILIALGLSWYGWH and ADALFALGIGIYILYSALRMG.

Belongs to the cation diffusion facilitator (CDF) transporter (TC 2.A.4) family. FieF subfamily. As to quaternary structure, homodimer.

It localises to the cell inner membrane. It catalyses the reaction Zn(2+)(in) + H(+)(out) = Zn(2+)(out) + H(+)(in). The catalysed reaction is Cd(2+)(in) + H(+)(out) = Cd(2+)(out) + H(+)(in). It carries out the reaction Fe(2+)(in) + H(+)(out) = Fe(2+)(out) + H(+)(in). Divalent metal cation transporter which exports Zn(2+), Cd(2+) and possibly Fe(2+). May be involved in zinc and iron detoxification by efflux. The chain is Cation-efflux pump FieF from Salmonella agona (strain SL483).